The chain runs to 194 residues: 3-isopropylmalate dehydratase small subunit (194 aa).

Belongs to the LeuD family. LeuD type 1 subfamily. In terms of assembly, heterodimer of LeuC and LeuD.

It catalyses the reaction (2R,3S)-3-isopropylmalate = (2S)-2-isopropylmalate. It participates in amino-acid biosynthesis; L-leucine biosynthesis; L-leucine from 3-methyl-2-oxobutanoate: step 2/4. In terms of biological role, catalyzes the isomerization between 2-isopropylmalate and 3-isopropylmalate, via the formation of 2-isopropylmaleate. The chain is 3-isopropylmalate dehydratase small subunit from Brevibacillus brevis (strain 47 / JCM 6285 / NBRC 100599).